The sequence spans 1141 residues: cGMP-inhibited 3',5'-cyclic phosphodiesterase 3A (1141 aa).

A disordered region spans residues 1–42; that stretch reads MAVPGDAARVRDKPVHSGVSQAPTAGRDCHHRADPASPRDSG. The next 6 membrane-spanning stretches (helical) occupy residues 61–81, 130–150, 160–180, 185–205, 210–230, and 232–252; these read LSSA…VRLV, LQPS…GLYL, AVAL…GLGV, LLSL…TWLV, LGVL…ISLE, and FKVA…ILLA. Ser-312 is subject to Phosphoserine. A phosphoserine; by PKA and PKC mark is found at Ser-428 and Ser-438. A compositionally biased stretch (low complexity) spans 436-448; it reads RVSSTWTTTTSAT. The disordered stretch occupies residues 436–482; that stretch reads RVSSTWTTTTSATGLPTLEPAPVRRDRSTSIKLQEAPSSSPDSWNNP. Polar residues predominate over residues 465-482; it reads SIKLQEAPSSSPDSWNNP. Phosphoserine is present on residues Ser-492, Ser-520, and Ser-524. The segment at 590–640 is disordered; it reads RPYSQGNPADEPLERSGVATRTPSRTDDTAQVTSDYETNNNSDSSDIVQNE. Residues 608-637 show a composition bias toward polar residues; that stretch reads ATRTPSRTDDTAQVTSDYETNNNSDSSDIV. An interaction with SLFN12 region spans residues 669-1141; sequence KPILAPEPLV…EEIPTQKPDQ (473 aa). The PDEase domain maps to 674-1093; it reads PEPLVMDNLD…KMWKKVIEEE (420 aa). The Proton donor role is filled by His-752. Residue His-752 coordinates AMP. Residues His-756, His-836, Asp-837, and Asp-950 each coordinate Mn(2+). Positions 837, 950, and 1001 each coordinate AMP. Asp-837 is a binding site for Mg(2+). Disordered stretches follow at residues 1023 to 1062 and 1100 to 1141; these read PGKW…ESPK and ENQS…KPDQ. Positions 1029 to 1056 are enriched in acidic residues; it reads DSDESGDTDDPEEEEEEAPAPNEEETCE. At Ser-1033 the chain carries Phosphoserine. Thr-1036 is modified (phosphothreonine). The span at 1100–1113 shows a compositional bias: polar residues; that stretch reads ENQSLDQTPQSHSS. A Glycyl lysine isopeptide (Lys-Gly) (interchain with G-Cter in SUMO2) cross-link involves residue Lys-1120. The segment covering 1125–1141 has biased composition (basic and acidic residues); sequence EKGKPRGEEIPTQKPDQ.

It belongs to the cyclic nucleotide phosphodiesterase family. PDE3 subfamily. As to quaternary structure, homodimer. Interacts with SLFN12; direct low affinity interaction which is stimulated by binding of 17beta-estradiol/E2 to PDE3A and that positively regulates the ribonuclease activity of SLFN12. Mn(2+) serves as cofactor. It depends on Mg(2+) as a cofactor.

Its subcellular location is the membrane. It localises to the cytoplasm. It is found in the cytosol. It carries out the reaction a nucleoside 3',5'-cyclic phosphate + H2O = a nucleoside 5'-phosphate + H(+). The catalysed reaction is 3',5'-cyclic AMP + H2O = AMP + H(+). The enzyme catalyses 3',5'-cyclic GMP + H2O = GMP + H(+). It catalyses the reaction 3',5'-cyclic UMP + H2O = UMP + H(+). Its activity is regulated as follows. Inhibited by cGMP. Inhibited by 17beta-estradiol. Inhibited by milrinone. Functionally, cyclic nucleotide phosphodiesterase with specificity for the second messengers cAMP and cGMP, which are key regulators of many important physiological processes. Also has activity toward cUMP. Independently of its catalytic activity it is part of an E2/17beta-estradiol-induced pro-apoptotic signaling pathway. E2 stabilizes the PDE3A/SLFN12 complex in the cytosol, promoting the dephosphorylation of SLFN12 and activating its pro-apoptotic ribosomal RNA/rRNA ribonuclease activity. This apoptotic pathway might be relevant in tissues with high concentration of E2 and be for instance involved in placenta remodeling. This is cGMP-inhibited 3',5'-cyclic phosphodiesterase 3A from Homo sapiens (Human).